We begin with the raw amino-acid sequence, 428 residues long: Maltoporin 1 (428 aa).

An N-terminal signal peptide occupies residues 1-25 (MTMKVKLLTTSVALALSMTAFSSNA).

The protein belongs to the porin LamB (TC 1.B.3) family. As to quaternary structure, homotrimer formed of three 18-stranded antiparallel beta-barrels, containing three independent channels.

The protein localises to the cell outer membrane. The enzyme catalyses beta-maltose(in) = beta-maltose(out). In terms of biological role, involved in the transport of maltose and maltodextrins. The chain is Maltoporin 1 from Aeromonas salmonicida (strain A449).